Consider the following 318-residue polypeptide: MFLTNLLMTIAPVLLAVAFLTLVERKILGYMQLRKGPIVVGPYGLLQPISDAVKLFTKEPLRPLTSSTTMFLMAPTLALALALTMWIPLPMPLPLTNMNLSLLFMLAMSSLAVYAILWSGWASNSNYALIGALRAVAQTISYEVTLAIILLSVLLLSGSYSLSTLIITQEYMWLILPSWPLAMMWFISTLAETNRAPFDLTEGESELVSGFNVEYAGGPFALFFLAEYTNIIMMNALTTILFLGAYNNPNTPELYTINFTTKTLLLTMAFLWIRASYPRFRYDQLMHLLWKNFLPLTLALCMWYTALPIITAAIPPQT.

Helical transmembrane passes span 2-22 (FLTNLLMTIAPVLLAVAFLTL), 70-90 (MFLMAPTLALALALTMWIPLP), 102-122 (LLFMLAMSSLAVYAILWSGWA), 147-167 (AIILLSVLLLSGSYSLSTLII), 171-191 (YMWLILPSWPLAMMWFISTLA), 222-242 (LFFLAEYTNIIMMNALTTILF), 253-273 (ELYTINFTTKTLLLTMAFLWI), and 294-314 (LPLTLALCMWYTALPIITAAI).

Belongs to the complex I subunit 1 family.

It localises to the mitochondrion inner membrane. The enzyme catalyses a ubiquinone + NADH + 5 H(+)(in) = a ubiquinol + NAD(+) + 4 H(+)(out). Functionally, core subunit of the mitochondrial membrane respiratory chain NADH dehydrogenase (Complex I) that is believed to belong to the minimal assembly required for catalysis. Complex I functions in the transfer of electrons from NADH to the respiratory chain. The immediate electron acceptor for the enzyme is believed to be ubiquinone. This is NADH-ubiquinone oxidoreductase chain 1 (MT-ND1) from Diaemus youngi (White-winged vampire bat).